The following is a 196-amino-acid chain: Chorion protein S19 (196 aa).

An N-terminal signal peptide occupies residues 1–16 (MNTFATLAIFISACLA).

Belongs to the chorion protein S19 family.

The protein localises to the secreted. Chorion membrane (egg shell) protein; plays a role in protecting the egg from the environment. This chain is Chorion protein S19 (Cp19), found in Drosophila grimshawi (Hawaiian fruit fly).